The chain runs to 1047 residues: Formin-like protein 3 (1047 aa).

The N-myristoyl glycine moiety is linked to residue glycine 2. The region spanning 22–462 is the GBD/FH3 domain; it reads VPMPDPTELE…AAFQRHNNIE (441 aa). The interval 520–561 is disordered; that stretch reads AVPVEAVAPPPPPPPPPPPPPPAPPLPSEVESIPIPPPPPPP. Over residues 527–546 the composition is skewed to pro residues; it reads APPPPPPPPPPPPPPAPPLP. The 391-residue stretch at 580–970 folds into the FH2 domain; that stretch reads IKKPIKTKFR…MREKLLAQEA (391 aa). One can recognise a DAD domain in the interval 1000–1037; the sequence is DHRPVYEGKDGTIEDIITVLKSVPFTARTAKRGSRFFC.

It belongs to the formin homology family.

The protein localises to the cytoplasm. It is found in the cell membrane. Functionally, required for developmental angiogenesis, but not for vasculogenesis. This is Formin-like protein 3 (fmnl3) from Danio rerio (Zebrafish).